The chain runs to 288 residues: Ribosome biogenesis GTPase A (288 aa).

The CP-type G domain maps to 14 to 179 (RRQVTEKLKL…LLDTPGILWP (166 aa)). Residues 58 to 61 (NKVD), 131 to 136 (NVGKST), and G175 each bind GTP.

The protein belongs to the TRAFAC class YlqF/YawG GTPase family. MTG1 subfamily. In terms of assembly, interacts with ctc. Interacts with the immature 50S ribosome subunit. 2 molecules of rbgA bind to one 50S subunit.

The protein localises to the cytoplasm. Its function is as follows. Essential protein that is required for a late step of 50S ribosomal subunit assembly. Has GTPase activity that is stimulated by interaction with the immature 50S ribosome subunit. Binds to the 23S rRNA. Required for the association of ribosomal proteins rplP and rpmA with the large subunit. This chain is Ribosome biogenesis GTPase A, found in Priestia megaterium (strain DSM 319 / IMG 1521) (Bacillus megaterium).